The following is a 78-amino-acid chain: Mandibular organ-inhibiting hormone 1 (78 aa).

Intrachain disulfides connect cysteine 7–cysteine 44, cysteine 24–cysteine 40, and cysteine 27–cysteine 53.

It belongs to the arthropod CHH/MIH/GIH/VIH hormone family. As to expression, produced by the medulla terminalis X-organ in the eyestalks and transported to the sinus gland where it is stored and released.

The protein localises to the secreted. Represses the synthesis of methyl farnesoate, the precursor of insect juvenile hormone III in the mandibular organ. The polypeptide is Mandibular organ-inhibiting hormone 1 (Cancer pagurus (Rock crab)).